The following is a 94-amino-acid chain: Scorpine (94 aa).

The N-terminal stretch at 1–19 (MNSKLTALIFLGLIAIAYC) is a signal peptide. The BetaSPN-type CS-alpha/beta domain maps to 55–94 (EFQCMANMDMLGNCEKHCQTSGEKGYCHGTKCKCGTPLSY). Cystine bridges form between Cys-58-Cys-81, Cys-68-Cys-86, and Cys-72-Cys-88.

It belongs to the long chain scorpion toxin family. Class 3 subfamily. In terms of tissue distribution, expressed by the venom gland.

The protein localises to the secreted. It localises to the target cell membrane. This full-length protein shows antibacterial activity against B.subtilis and K.pneumoniae. Also shows a potent inhibitory effect on the ookinete (ED(50) 0.7 uM) and gamete (ED(50) 10 uM) stages of Plasmodium berghei development. In addition, induces cell membrane disruption, leakage currents and cell death on HEK293 cell line (tested at 25 uM). In Pandinus imperator (Emperor scorpion), this protein is Scorpine.